Here is a 509-residue protein sequence, read N- to C-terminus: 2-isopropylmalate synthase (509 aa).

The region spanning 5–267 (IQIFDTTLRD…QTALNLEETK (263 aa)) is the Pyruvate carboxyltransferase domain. Mn(2+) is bound by residues aspartate 14, histidine 202, histidine 204, and asparagine 238. Positions 391-509 (KLETLQLQYV…AAENVEKVGN (119 aa)) are regulatory domain.

This sequence belongs to the alpha-IPM synthase/homocitrate synthase family. LeuA type 1 subfamily. Homodimer. Requires Mn(2+) as cofactor.

It is found in the cytoplasm. The catalysed reaction is 3-methyl-2-oxobutanoate + acetyl-CoA + H2O = (2S)-2-isopropylmalate + CoA + H(+). Its pathway is amino-acid biosynthesis; L-leucine biosynthesis; L-leucine from 3-methyl-2-oxobutanoate: step 1/4. Functionally, catalyzes the condensation of the acetyl group of acetyl-CoA with 3-methyl-2-oxobutanoate (2-ketoisovalerate) to form 3-carboxy-3-hydroxy-4-methylpentanoate (2-isopropylmalate). The sequence is that of 2-isopropylmalate synthase from Staphylococcus aureus (strain MW2).